Here is a 65-residue protein sequence, read N- to C-terminus: Ferredoxin-1 (65 aa).

One can recognise a 4Fe-4S ferredoxin-type domain in the interval 2–30 (AMKIDPELCTSCGDCEPVCPTNAIAPKKG). Cysteine 10, cysteine 13, cysteine 16, cysteine 20, cysteine 39, cysteine 42, cysteine 51, and cysteine 55 together coordinate [4Fe-4S] cluster.

It depends on [4Fe-4S] cluster as a cofactor.

Functionally, ferredoxins are iron-sulfur proteins that transfer electrons in a wide variety of metabolic reactions. This ferredoxin probably participates in nitrogen fixation. This Rhodobacter capsulatus (Rhodopseudomonas capsulata) protein is Ferredoxin-1 (fdxN).